We begin with the raw amino-acid sequence, 244 residues long: Phosphoadenosine 5'-phosphosulfate reductase (244 aa).

Catalysis depends on Cys-239, which acts as the Nucleophile; cysteine thiosulfonate intermediate.

This sequence belongs to the PAPS reductase family. CysH subfamily.

The protein resides in the cytoplasm. The enzyme catalyses [thioredoxin]-disulfide + sulfite + adenosine 3',5'-bisphosphate + 2 H(+) = [thioredoxin]-dithiol + 3'-phosphoadenylyl sulfate. It functions in the pathway sulfur metabolism; hydrogen sulfide biosynthesis; sulfite from sulfate: step 3/3. Functionally, catalyzes the formation of sulfite from phosphoadenosine 5'-phosphosulfate (PAPS) using thioredoxin as an electron donor. This is Phosphoadenosine 5'-phosphosulfate reductase from Yersinia pseudotuberculosis serotype O:1b (strain IP 31758).